A 220-amino-acid polypeptide reads, in one-letter code: 7-cyano-7-deazaguanine synthase (220 aa).

ATP is bound at residue 7–17; the sequence is ISGGMDSSTAA. Zn(2+) contacts are provided by C187, C195, C198, and C201.

The protein belongs to the QueC family. Zn(2+) serves as cofactor.

It carries out the reaction 7-carboxy-7-deazaguanine + NH4(+) + ATP = 7-cyano-7-deazaguanine + ADP + phosphate + H2O + H(+). It functions in the pathway purine metabolism; 7-cyano-7-deazaguanine biosynthesis. Its function is as follows. Catalyzes the ATP-dependent conversion of 7-carboxy-7-deazaguanine (CDG) to 7-cyano-7-deazaguanine (preQ(0)). The sequence is that of 7-cyano-7-deazaguanine synthase from Campylobacter hominis (strain ATCC BAA-381 / DSM 21671 / CCUG 45161 / LMG 19568 / NCTC 13146 / CH001A).